Here is a 75-residue protein sequence, read N- to C-terminus: Phytosulfokines (75 aa).

The signal sequence occupies residues 1–22 (MSSKAITLLLIALLFSLSLAQA). The propeptide occupies 23–66 (ARPLQPADSTKSVHVIPEKVHDEACEGVGEEECLMRRTLTAHVD). Sulfotyrosine is present on residues tyrosine 67 and tyrosine 69. A propeptide spanning residues 72-75 (DHNP) is cleaved from the precursor.

The protein belongs to the phytosulfokine family. Post-translationally, sulfation is important for activity and for the binding to a putative membrane receptor. Deletion of the sulfate groups of Tyr-67 and Tyr-69 resulted in compounds with respectively 0.6% and 4% of the activity. PSK-alpha is produced by endopeptidase digestion. PSK-beta is produced from PSK-alpha by exopeptidase digestion.

The protein localises to the secreted. Functionally, promotes plant cell differentiation, organogenesis and somatic embryogenesis as well as cell proliferation. The chain is Phytosulfokines (PSK) from Asparagus officinalis (Garden asparagus).